A 418-amino-acid polypeptide reads, in one-letter code: Lariat debranching enzyme (418 aa).

Residues Cys-8, His-10, Asp-39, and Asn-84 each contribute to the a divalent metal cation site. The interval 124-154 is lariat recognition loop; it reads SGIYNERHYRSGHFERPPYNESTIRSVYHVR. A divalent metal cation contacts are provided by His-174, His-226, and His-228. A disordered region spans residues 372–418; it reads GERTDIPASLAPSDLPTYDSEEIPIDDIDEIEEMEEAKADDHTRDDA. Residues 390 to 406 show a composition bias toward acidic residues; the sequence is DSEEIPIDDIDEIEEME. The span at 407–418 shows a compositional bias: basic and acidic residues; the sequence is EAKADDHTRDDA.

This sequence belongs to the lariat debranching enzyme family. The cofactor is Fe(2+). It depends on Zn(2+) as a cofactor. Mn(2+) is required as a cofactor. Widely expressed. Expressed in roots, stems, cauline and rosette leaves, flower buds and siliques.

It is found in the nucleus. Its activity is regulated as follows. Active in presence of diverse metals including Fe(2+), Zn(2+), Mn(2+). Binds two metal cations in two adjacent alpha and beta metal-binding pockets. Its function is as follows. Cleaves the 2'-5' phosphodiester linkage at the branch point of lariat intron pre-mRNAs after splicing and converts them into linear molecules that are subsequently degraded. It thereby facilitates ribonucleotide turnover. It may also participate in retrovirus replication via an RNA lariat intermediate in cDNA synthesis. Plays en essential role during embryogenesis. The chain is Lariat debranching enzyme (DBR1) from Arabidopsis thaliana (Mouse-ear cress).